Reading from the N-terminus, the 59-residue chain is Ferredoxin (59 aa).

The 28-residue stretch at lysine 2 to aspartate 29 folds into the 4Fe-4S ferredoxin-type domain. Positions 10, 13, and 16 each coordinate [4Fe-4S] cluster. Cysteine 20 and cysteine 43 form a disulfide bridge. Cysteine 51 lines the [4Fe-4S] cluster pocket.

[4Fe-4S] cluster is required as a cofactor. [3Fe-4S] cluster serves as cofactor.

Its function is as follows. Ferredoxins are iron-sulfur proteins that transfer electrons in a wide variety of metabolic reactions. This chain is Ferredoxin, found in Thermococcus litoralis.